A 129-amino-acid polypeptide reads, in one-letter code: Small ribosomal subunit protein uS11 (129 aa).

The protein belongs to the universal ribosomal protein uS11 family. Part of the 30S ribosomal subunit. Interacts with proteins S7 and S18. Binds to IF-3.

In terms of biological role, located on the platform of the 30S subunit, it bridges several disparate RNA helices of the 16S rRNA. Forms part of the Shine-Dalgarno cleft in the 70S ribosome. The chain is Small ribosomal subunit protein uS11 from Bacteroides thetaiotaomicron (strain ATCC 29148 / DSM 2079 / JCM 5827 / CCUG 10774 / NCTC 10582 / VPI-5482 / E50).